Consider the following 828-residue polypeptide: Periplasmic nitrate reductase (828 aa).

The segment at residues 1–31 is a signal peptide (tat-type signal); it reads MKLSRRSFMKANAVAAAAAAAGLSVPGVARA. The 4Fe-4S Mo/W bis-MGD-type domain occupies 39 to 95; the sequence is IKWDKAPCRFCGTGCGVLVGTQQGRVVACQGDPDAPVNRGLNCIKGYFLPKIMYGKD. [4Fe-4S] cluster contacts are provided by Cys-46, Cys-49, Cys-53, and Cys-81. Residues Lys-83, Gln-150, Asn-175, Cys-179, 212-219, 243-247, 262-264, Met-372, Gln-376, Asn-482, 508-509, Lys-531, Asp-558, and 718-727 each bind Mo-bis(molybdopterin guanine dinucleotide); these read WGANMAEM, STYQH, QSD, SD, and TGRVLEHWHT. Residue Phe-794 participates in substrate binding. Mo-bis(molybdopterin guanine dinucleotide)-binding residues include Asn-802 and Lys-819.

This sequence belongs to the prokaryotic molybdopterin-containing oxidoreductase family. NasA/NapA/NarB subfamily. As to quaternary structure, component of the periplasmic nitrate reductase NapAB complex composed of NapA and NapB. [4Fe-4S] cluster is required as a cofactor. Mo-bis(molybdopterin guanine dinucleotide) serves as cofactor. In terms of processing, predicted to be exported by the Tat system. The position of the signal peptide cleavage has not been experimentally proven.

It is found in the periplasm. It carries out the reaction 2 Fe(II)-[cytochrome] + nitrate + 2 H(+) = 2 Fe(III)-[cytochrome] + nitrite + H2O. In terms of biological role, catalytic subunit of the periplasmic nitrate reductase complex NapAB. Receives electrons from NapB and catalyzes the reduction of nitrate to nitrite. The polypeptide is Periplasmic nitrate reductase (Shigella flexneri).